Consider the following 440-residue polypeptide: COP9 signalosome complex subunit 4 (440 aa).

A PCI domain is found at 216 to 386; the sequence is SNRQFLAASQ…RIIYFESGLE (171 aa).

It belongs to the CSN4 family. As to quaternary structure, component of the COP9 signalosome (CSN) complex.

The protein localises to the cytoplasm. Its subcellular location is the nucleus. Functionally, component of the COP9 signalosome (CSN) complex that acts as an regulator of the ubiquitin (Ubl) conjugation pathway by mediating the deneddylation of the cullin subunit of SCF-type E3 ubiquitin-protein ligase complexes. The CSN complex is involved in the regulation of the circadian clock through its control of the stability of the SCF(FWD1) complex. In Neurospora crassa (strain ATCC 24698 / 74-OR23-1A / CBS 708.71 / DSM 1257 / FGSC 987), this protein is COP9 signalosome complex subunit 4 (csn-4).